Here is a 336-residue protein sequence, read N- to C-terminus: 3-isopropylmalate dehydrogenase (336 aa).

Arginine 86, arginine 96, arginine 117, and aspartate 201 together coordinate substrate. Mg(2+) contacts are provided by aspartate 201, aspartate 225, and aspartate 229. 258–270 provides a ligand contact to NAD(+); sequence GAAFDIAGKGIAN.

Belongs to the isocitrate and isopropylmalate dehydrogenases family. In terms of assembly, homotetramer. Requires Mg(2+) as cofactor. The cofactor is Mn(2+).

The protein resides in the cytoplasm. The enzyme catalyses (2R,3S)-3-isopropylmalate + NAD(+) = 4-methyl-2-oxopentanoate + CO2 + NADH. It participates in amino-acid biosynthesis; L-leucine biosynthesis; L-leucine from 3-methyl-2-oxobutanoate: step 3/4. Catalyzes the oxidation of 3-carboxy-2-hydroxy-4-methylpentanoate (3-isopropylmalate) to 3-carboxy-4-methyl-2-oxopentanoate. The product decarboxylates to 4-methyl-2 oxopentanoate. The chain is 3-isopropylmalate dehydrogenase (leuB) from Saccharolobus solfataricus (strain ATCC 35092 / DSM 1617 / JCM 11322 / P2) (Sulfolobus solfataricus).